The chain runs to 307 residues: Acetyl-coenzyme A carboxylase carboxyl transferase subunit beta (307 aa).

Residues 1 to 26 (MAMAEPQDPKKGDKKTAERRGGGWLS) are disordered. Residues 7–21 (QDPKKGDKKTAERRG) are compositionally biased toward basic and acidic residues. The CoA carboxyltransferase N-terminal domain occupies 45-307 (LWVKCPDTGE…LMMGRKRQAA (263 aa)).

This sequence belongs to the AccD/PCCB family. In terms of assembly, acetyl-CoA carboxylase is a heterohexamer composed of biotin carboxyl carrier protein (AccB), biotin carboxylase (AccC) and two subunits each of ACCase subunit alpha (AccA) and ACCase subunit beta (AccD).

Its subcellular location is the cytoplasm. It catalyses the reaction N(6)-carboxybiotinyl-L-lysyl-[protein] + acetyl-CoA = N(6)-biotinyl-L-lysyl-[protein] + malonyl-CoA. The protein operates within lipid metabolism; malonyl-CoA biosynthesis; malonyl-CoA from acetyl-CoA: step 1/1. Its function is as follows. Component of the acetyl coenzyme A carboxylase (ACC) complex. Biotin carboxylase (BC) catalyzes the carboxylation of biotin on its carrier protein (BCCP) and then the CO(2) group is transferred by the transcarboxylase to acetyl-CoA to form malonyl-CoA. This Caulobacter vibrioides (strain ATCC 19089 / CIP 103742 / CB 15) (Caulobacter crescentus) protein is Acetyl-coenzyme A carboxylase carboxyl transferase subunit beta.